A 1182-amino-acid polypeptide reads, in one-letter code: Rho GTPase-activating protein 20 (1182 aa).

A disordered region spans residues methionine 1–leucine 40. Serine 46 carries the post-translational modification Phosphoserine. A PH domain is found at leucine 86–glutamate 187. Residues lysine 194–aspartate 283 enclose the Ras-associating domain. The Rho-GAP domain maps to valine 365–phenylalanine 551. A phosphoserine mark is found at serine 704 and serine 730. Disordered stretches follow at residues lysine 744–threonine 791, alanine 932–aspartate 953, glutamine 981–serine 1009, and glutamate 1140–histidine 1182. Polar residues predominate over residues phenylalanine 757–glutamate 775. Residues serine 933–aspartate 953 are compositionally biased toward low complexity.

As to expression, highest expression is found in testis. Ubiquitously expressed in extragonadal tissues.

Functionally, GTPase activator for the Rho-type GTPases by converting them to an inactive GDP-bound state. The chain is Rho GTPase-activating protein 20 (Arhgap20) from Rattus norvegicus (Rat).